Here is a 435-residue protein sequence, read N- to C-terminus: Hydrogenobyrinate a,c-diamide synthase (435 aa).

The region spanning 247–435 is the GATase cobBQ-type domain; it reads RIALARDAAF…TGSFFHLIAG (189 aa). C329 (nucleophile) is an active-site residue.

Belongs to the CobB/CbiA family. Requires Mg(2+) as cofactor.

The enzyme catalyses hydrogenobyrinate + 2 L-glutamine + 2 ATP + 2 H2O = hydrogenobyrinate a,c-diamide + 2 L-glutamate + 2 ADP + 2 phosphate + 2 H(+). It participates in cofactor biosynthesis; adenosylcobalamin biosynthesis; cob(II)yrinate a,c-diamide from precorrin-2 (aerobic route): step 9/10. Functionally, catalyzes the ATP-dependent amidation of the two carboxylate groups at positions a and c of hydrogenobyrinate, using either L-glutamine or ammonia as the nitrogen source. This is Hydrogenobyrinate a,c-diamide synthase from Rhodobacter capsulatus (strain ATCC BAA-309 / NBRC 16581 / SB1003).